The sequence spans 409 residues: MTLKDYDLELFNAIQREDNRQKEHIELIASENFVSDAVLEAQGSILTNKYAEGYPNKRYYGGCEFVDQVEILAQDRLKQIFNAKFVNVQPHSGSQANAAVYQALLSPGDRVLGMDLNAGGHLTHGYKLSFSGHYYEAHAYGVSRFDERIDYEEVLKIAIEVKPKMIIAGASAYPRVIDFKKFREIADTVGAYLFVDMAHIAGLVACGLHPSPLPYADVVTSTTHKTLRGPRGGIILTNDASIAKKIDRAVFPGQQGGPLMHIIAAKAVAFKEALDPNFKVYQTQVIKNAKALSDTFKSLGYKLISDGTDNHLILVDVKSKLGITGRDAEDALYKANITINKNQLPFDQEKPMLTSGIRLGTPAMTTKGFKENEFIKVAQLIDEVLSNINNEEVINKVKKEVLKLMKDVK.

(6S)-5,6,7,8-tetrahydrofolate contacts are provided by residues Leu-116 and 120–122 (GHL). At Lys-225 the chain carries N6-(pyridoxal phosphate)lysine.

It belongs to the SHMT family. In terms of assembly, homodimer. Pyridoxal 5'-phosphate is required as a cofactor.

Its subcellular location is the cytoplasm. It carries out the reaction (6R)-5,10-methylene-5,6,7,8-tetrahydrofolate + glycine + H2O = (6S)-5,6,7,8-tetrahydrofolate + L-serine. Its pathway is one-carbon metabolism; tetrahydrofolate interconversion. The protein operates within amino-acid biosynthesis; glycine biosynthesis; glycine from L-serine: step 1/1. In terms of biological role, catalyzes the reversible interconversion of serine and glycine with tetrahydrofolate (THF) serving as the one-carbon carrier. This reaction serves as the major source of one-carbon groups required for the biosynthesis of purines, thymidylate, methionine, and other important biomolecules. Also exhibits THF-independent aldolase activity toward beta-hydroxyamino acids, producing glycine and aldehydes, via a retro-aldol mechanism. The protein is Serine hydroxymethyltransferase of Acholeplasma laidlawii (strain PG-8A).